A 546-amino-acid polypeptide reads, in one-letter code: Glutamate--tRNA ligase (546 aa).

Residues 41–51 (PSPTGFQHIGG) carry the 'HIGH' region motif. The short motif at 293 to 297 (KLSKR) is the 'KMSKS' region element. Lysine 296 provides a ligand contact to ATP.

It belongs to the class-I aminoacyl-tRNA synthetase family. Glutamate--tRNA ligase type 1 subfamily. In terms of assembly, monomer.

It is found in the cytoplasm. The enzyme catalyses tRNA(Glu) + L-glutamate + ATP = L-glutamyl-tRNA(Glu) + AMP + diphosphate. In terms of biological role, catalyzes the attachment of glutamate to tRNA(Glu) in a two-step reaction: glutamate is first activated by ATP to form Glu-AMP and then transferred to the acceptor end of tRNA(Glu). The polypeptide is Glutamate--tRNA ligase (Clostridium perfringens (strain 13 / Type A)).